The following is a 483-amino-acid chain: Trehalose-6-phosphate synthase (483 aa).

D-glucose 6-phosphate is bound at residue Arg-22. A UDP-alpha-D-glucose-binding site is contributed by 42 to 43 (GG). Positions 94 and 148 each coordinate D-glucose 6-phosphate. Positions 290 and 295 each coordinate UDP-alpha-D-glucose. Arg-328 provides a ligand contact to D-glucose 6-phosphate. Residue 393–397 (LVAKE) participates in UDP-alpha-D-glucose binding.

This sequence belongs to the glycosyltransferase 20 family. In terms of assembly, homotetramer.

It carries out the reaction ADP-alpha-D-glucose + D-glucose 6-phosphate = alpha,alpha-trehalose 6-phosphate + ADP + H(+). The enzyme catalyses CDP-alpha-D-glucose + D-glucose 6-phosphate = alpha,alpha-trehalose 6-phosphate + CDP + H(+). The catalysed reaction is GDP-alpha-D-glucose + D-glucose 6-phosphate = alpha,alpha-trehalose 6-phosphate + GDP + H(+). It catalyses the reaction TDP-alpha-D-glucose + D-glucose 6-phosphate = 5-methyl-UDP + alpha,alpha-trehalose 6-phosphate + H(+). It carries out the reaction D-glucose 6-phosphate + UDP-alpha-D-glucose = alpha,alpha-trehalose 6-phosphate + UDP + H(+). It functions in the pathway glycan biosynthesis; trehalose biosynthesis. In terms of biological role, probably involved in the osmoprotection via the biosynthesis of trehalose and in the production of glycogen and alpha-glucan via the TreS-Pep2 branch involved in the biosynthesis of maltose-1-phosphate (M1P). Catalyzes the transfer of glucose from UDP-glucose (UDP-Glc) to D-glucose 6-phosphate (Glc-6-P) to form trehalose-6-phosphate. Probably also able to use ADP-Glc, CDP-Glc, GDP-Glc and TDP-Glc as glucosyl donors. This Mycobacterium sp. (strain JLS) protein is Trehalose-6-phosphate synthase.